A 66-amino-acid chain; its full sequence is MNQGRIWTVVNPGVGLPLLLGSVTVIAILVHYAVLSNTTWFPKYWNGATVAAPAAAPAPAAPAAKK.

Residues 1–11 lie on the Cytoplasmic side of the membrane; it reads MNQGRIWTVVN. Residues 12-35 traverse the membrane as a helical segment; the sequence is PGVGLPLLLGSVTVIAILVHYAVL. His31 contributes to the a bacteriochlorophyll binding site. Over 36-66 the chain is Periplasmic; it reads SNTTWFPKYWNGATVAAPAAAPAPAAPAAKK.

The protein belongs to the antenna complex alpha subunit family. The core complex is formed by different alpha and beta chains, binding bacteriochlorophyll molecules, and arranged most probably in tetrameric structures disposed around the reaction center. The non-pigmented gamma chains may constitute additional components.

Its subcellular location is the cell inner membrane. Functionally, antenna complexes are light-harvesting systems, which transfer the excitation energy to the reaction centers. The chain is Light-harvesting protein B-800-850 alpha chain B (pucAB) from Rhodopseudomonas palustris (strain ATCC BAA-98 / CGA009).